Reading from the N-terminus, the 580-residue chain is DNA mismatch repair protein MutL (580 aa).

The protein belongs to the DNA mismatch repair MutL/HexB family.

This protein is involved in the repair of mismatches in DNA. It is required for dam-dependent methyl-directed DNA mismatch repair. May act as a 'molecular matchmaker', a protein that promotes the formation of a stable complex between two or more DNA-binding proteins in an ATP-dependent manner without itself being part of a final effector complex. This Chlamydia felis (strain Fe/C-56) (Chlamydophila felis) protein is DNA mismatch repair protein MutL.